Reading from the N-terminus, the 227-residue chain is Phosphoglycolate phosphatase (227 aa).

The active-site Nucleophile is the Asp-8. The Mg(2+) site is built by Asp-8 and Asp-10. Lys-152 contributes to the substrate binding site. Asp-175 and Asp-179 together coordinate Mg(2+).

It belongs to the archaeal SPP-like hydrolase family. Mg(2+) serves as cofactor.

It catalyses the reaction 2-phosphoglycolate + H2O = glycolate + phosphate. Functionally, catalyzes the dephosphorylation of 2-phosphoglycolate. The polypeptide is Phosphoglycolate phosphatase (Halorubrum lacusprofundi (strain ATCC 49239 / DSM 5036 / JCM 8891 / ACAM 34)).